The chain runs to 253 residues: Troponin T, fast skeletal muscle isoforms (253 aa).

The span at 1–25 shows a compositional bias: acidic residues; that stretch reads MSDTEEVEHGEEEYEEEEEVQEEEV. Disordered stretches follow at residues 1-58 and 97-178; these read MSDT…DIQK and RAER…VLAE. S2 bears the N-acetylserine mark. 3 stretches are compositionally biased toward basic and acidic residues: residues 46–58, 97–139, and 167–178; these read PEGE…DIQK, RAER…DDLK, and TARETKKKVLAE.

It belongs to the troponin T family.

Its function is as follows. Troponin T is the tropomyosin-binding subunit of troponin, the thin filament regulatory complex which confers calcium-sensitivity to striated muscle actomyosin ATPase activity. In Coturnix japonica (Japanese quail), this protein is Troponin T, fast skeletal muscle isoforms (TNNT3).